Reading from the N-terminus, the 223-residue chain is Putative 3-methyladenine DNA glycosylase (223 aa).

The protein belongs to the DNA glycosylase MPG family.

The sequence is that of Putative 3-methyladenine DNA glycosylase from Rickettsia typhi (strain ATCC VR-144 / Wilmington).